The following is an 864-amino-acid chain: Structure-specific endonuclease subunit SLX4 (864 aa).

Over residues 35–54 (SPLSLPSPTSLLDFLSTSTS) the composition is skewed to low complexity. Disordered stretches follow at residues 35–72 (SPLS…GKEV), 89–113 (VVSG…PGNA), 160–193 (KANQ…HIND), 288–318 (GLSD…NPPK), 348–382 (LSDE…EKKN), 413–432 (ANGH…HISN), and 625–771 (KTSN…ETLP). The span at 58-72 (ARSDTDGDKTQGKEV) shows a compositional bias: basic and acidic residues. Polar residues-rich tracts occupy residues 160–169 (KANQTVSLQP) and 289–306 (LSDS…SATS). The span at 307–317 (KPRRVKAKNPP) shows a compositional bias: basic residues. Over residues 659 to 668 (SIPQTATTQV) the composition is skewed to polar residues. Residues 683-695 (VPVPSRRSTSTSK) show a composition bias toward low complexity. Polar residues predominate over residues 743–771 (PESFNLPTTPLTIRSGKIPSTGTASETLP).

This sequence belongs to the SLX4 family. As to quaternary structure, forms a heterodimer with SLX1. In terms of processing, phosphorylated in response to DNA damage.

The protein resides in the nucleus. Regulatory subunit of the SLX1-SLX4 structure-specific endonuclease that resolves DNA secondary structures generated during DNA repair and recombination. Has endonuclease activity towards branched DNA substrates, introducing single-strand cuts in duplex DNA close to junctions with ss-DNA. This Paracoccidioides brasiliensis (strain Pb03) protein is Structure-specific endonuclease subunit SLX4.